We begin with the raw amino-acid sequence, 183 residues long: Ribosome rescue factor SmrB (183 aa).

The 76-residue stretch at 98 to 173 (LDLHGLTQLQ…GDAALLVLIE (76 aa)) folds into the Smr domain.

The protein belongs to the SmrB family. Associates with collided ribosomes, but not with correctly translating polysomes.

Its function is as follows. Acts as a ribosome collision sensor. Detects stalled/collided disomes (pairs of ribosomes where the leading ribosome is stalled and a second ribosome has collided with it) and endonucleolytically cleaves mRNA at the 5' boundary of the stalled ribosome. Stalled/collided disomes form a new interface (primarily via the 30S subunits) that binds SmrB. Cleaved mRNA becomes available for tmRNA ligation, leading to ribosomal subunit dissociation and rescue of stalled ribosomes. The sequence is that of Ribosome rescue factor SmrB from Escherichia coli O7:K1 (strain IAI39 / ExPEC).